We begin with the raw amino-acid sequence, 365 residues long: MLVPPEMIAVQSKTVFQINKYYAEKVQLRMGNIARVIREICKIVQEVLREVEVQEPRFISSLVECNGRFEGIEVVTPNFFEVVLYLNQMGVFNFVDDGSLPGAAVLKLSDGRKRSMSLWVEFITASGYLSARKIRSRFHTLVAQAVEKCPYREMVKLVPDTTEVKLKIRERYIVQITPAFKCTGIWPRSAAHWPIPHIPWPHPALVAEVKSEGFDLLSKESVILQGKNANIEGDAWILHFTEAENRLLQGGYRKRCLSILKTLCDRHLDLPGAPITYYHLKTLLLYECEKHPREAEWDANCIGDRLNGIFLQMISCLQNRRCPHYFLPSLDLFKGKSPTALDNASKHVWKLCREILTSTKAFDRL.

Belongs to the mab-21 family.

The protein is Protein mab-21-like of Aedes aegypti (Yellowfever mosquito).